Consider the following 310-residue polypeptide: UPF0761 membrane protein VSAL_I2938 (310 aa).

A run of 6 helical transmembrane segments spans residues 34-54 (YMAYITLLSLVPLVTVLLSVL), 97-117 (MTAVGSGFLFVASVMLISAID), 136-156 (FSLYWMILTLGPLLVWASLAA), 178-198 (LLGWLPIILSFSAFLGLYLLV), 207-227 (HALVGAMSAGCLFEVSKVGFA), and 242-262 (ALAAVPILFVWIYLCWIIVLI).

Belongs to the UPF0761 family.

Its subcellular location is the cell inner membrane. The chain is UPF0761 membrane protein VSAL_I2938 from Aliivibrio salmonicida (strain LFI1238) (Vibrio salmonicida (strain LFI1238)).